The following is a 320-amino-acid chain: Glutathione synthetase (320 aa).

The ATP-grasp domain maps to 133–317; sequence KMYTLQFAAV…LGEKVICWLE (185 aa). ATP is bound at residue 159–215; that stretch reads LEEHGAAVLKPLGGKAGEGILFLDPGDRNFNSLVEISTQHGKEPVMVQRFLPEAKEG. Residues glutamate 288 and asparagine 290 each coordinate Mg(2+).

Belongs to the prokaryotic GSH synthase family. The cofactor is Mg(2+). Mn(2+) serves as cofactor.

The enzyme catalyses gamma-L-glutamyl-L-cysteine + glycine + ATP = glutathione + ADP + phosphate + H(+). Its pathway is sulfur metabolism; glutathione biosynthesis; glutathione from L-cysteine and L-glutamate: step 2/2. This is Glutathione synthetase from Synechocystis sp. (strain ATCC 27184 / PCC 6803 / Kazusa).